The sequence spans 400 residues: Nicotinate phosphoribosyltransferase (400 aa).

Histidine 220 is modified (phosphohistidine; by autocatalysis).

This sequence belongs to the NAPRTase family. Post-translationally, transiently phosphorylated on a His residue during the reaction cycle. Phosphorylation strongly increases the affinity for substrates and increases the rate of nicotinate D-ribonucleotide production. Dephosphorylation regenerates the low-affinity form of the enzyme, leading to product release.

It carries out the reaction nicotinate + 5-phospho-alpha-D-ribose 1-diphosphate + ATP + H2O = nicotinate beta-D-ribonucleotide + ADP + phosphate + diphosphate. It functions in the pathway cofactor biosynthesis; NAD(+) biosynthesis; nicotinate D-ribonucleotide from nicotinate: step 1/1. In terms of biological role, catalyzes the synthesis of beta-nicotinate D-ribonucleotide from nicotinate and 5-phospho-D-ribose 1-phosphate at the expense of ATP. In Escherichia fergusonii (strain ATCC 35469 / DSM 13698 / CCUG 18766 / IAM 14443 / JCM 21226 / LMG 7866 / NBRC 102419 / NCTC 12128 / CDC 0568-73), this protein is Nicotinate phosphoribosyltransferase.